A 119-amino-acid chain; its full sequence is Ribosome-binding factor A (119 aa).

Belongs to the RbfA family. Monomer. Binds 30S ribosomal subunits, but not 50S ribosomal subunits or 70S ribosomes.

The protein resides in the cytoplasm. One of several proteins that assist in the late maturation steps of the functional core of the 30S ribosomal subunit. Associates with free 30S ribosomal subunits (but not with 30S subunits that are part of 70S ribosomes or polysomes). Required for efficient processing of 16S rRNA. May interact with the 5'-terminal helix region of 16S rRNA. The sequence is that of Ribosome-binding factor A from Coxiella burnetii (strain CbuK_Q154) (Coxiella burnetii (strain Q154)).